A 91-amino-acid chain; its full sequence is Small ribosomal subunit protein uS19 (91 aa).

Belongs to the universal ribosomal protein uS19 family.

Its function is as follows. Protein S19 forms a complex with S13 that binds strongly to the 16S ribosomal RNA. The chain is Small ribosomal subunit protein uS19 from Metamycoplasma arthritidis (strain 158L3-1) (Mycoplasma arthritidis).